Here is a 283-residue protein sequence, read N- to C-terminus: Large ribosomal subunit protein uL4 (283 aa).

This sequence belongs to the universal ribosomal protein uL4 family. Part of the 50S ribosomal subunit.

Its function is as follows. One of the primary rRNA binding proteins, this protein initially binds near the 5'-end of the 23S rRNA. It is important during the early stages of 50S assembly. It makes multiple contacts with different domains of the 23S rRNA in the assembled 50S subunit and ribosome. Functionally, forms part of the polypeptide exit tunnel. The chain is Large ribosomal subunit protein uL4 from Pyrobaculum aerophilum (strain ATCC 51768 / DSM 7523 / JCM 9630 / CIP 104966 / NBRC 100827 / IM2).